The chain runs to 320 residues: Lipoyl synthase (320 aa).

[4Fe-4S] cluster contacts are provided by Cys67, Cys72, Cys78, Cys93, Cys97, Cys100, and Ser307. The region spanning 79-296 is the Radical SAM core domain; sequence FNHGTATFMI…RDKAEKMGFE (218 aa).

Belongs to the radical SAM superfamily. Lipoyl synthase family. The cofactor is [4Fe-4S] cluster.

The protein localises to the cytoplasm. It carries out the reaction [[Fe-S] cluster scaffold protein carrying a second [4Fe-4S](2+) cluster] + N(6)-octanoyl-L-lysyl-[protein] + 2 oxidized [2Fe-2S]-[ferredoxin] + 2 S-adenosyl-L-methionine + 4 H(+) = [[Fe-S] cluster scaffold protein] + N(6)-[(R)-dihydrolipoyl]-L-lysyl-[protein] + 4 Fe(3+) + 2 hydrogen sulfide + 2 5'-deoxyadenosine + 2 L-methionine + 2 reduced [2Fe-2S]-[ferredoxin]. Its pathway is protein modification; protein lipoylation via endogenous pathway; protein N(6)-(lipoyl)lysine from octanoyl-[acyl-carrier-protein]: step 2/2. Catalyzes the radical-mediated insertion of two sulfur atoms into the C-6 and C-8 positions of the octanoyl moiety bound to the lipoyl domains of lipoate-dependent enzymes, thereby converting the octanoylated domains into lipoylated derivatives. The protein is Lipoyl synthase of Histophilus somni (strain 129Pt) (Haemophilus somnus).